The chain runs to 333 residues: Heat shock transcription factor, X-linked member 3 (333 aa).

Positions methionine 1 to asparagine 66 are disordered. Positions glycine 29 to serine 39 are enriched in low complexity. Positions alanine 49–serine 60 are enriched in polar residues. Residues phenylalanine 79–lysine 182 mediate DNA binding. The disordered stretch occupies residues glutamine 227–glycine 275. The span at glycine 228 to arginine 242 shows a compositional bias: polar residues.

This sequence belongs to the HSF family.

It is found in the nucleus. The sequence is that of Heat shock transcription factor, X-linked member 3 from Homo sapiens (Human).